Here is a 427-residue protein sequence, read N- to C-terminus: MSAIVDIIGREVLDSRGNPTVECDVLLESGVMGRAAVPSGASTGSREAIELRDGDKGRYLGKGVLKAVEHINTEISEAIMGLDASEQAFLDRTLIDLDGTENKGRLGANATLAVSMAVAKAAAEEAGLPLYRYFGGSGAMQMPVPMMNIVNGGAHANNSLDIQEFMVMPVGQQSFREALRCGAEIFHALKKIIADKGMSTAVGDEGGFAPNFASNEECLNTILSAIEKAGYRPGEDVLLALDCAASEFYRDGKYHLDGEGLQLSSVDFANYLANLADKFPIVSIEDGMHESDWDGWKVLTEKLGNKVQLVGDDLFVTNTRILKEGIEKGIANSILIKINQIGTLTETFAAIEMAKRAGYTAVISHRSGETEDSTIADIAVGTNAGQIKTGSLSRSDRIAKYNQLLRIEEDLGDIASYPGKSAFYNLR.

Q163 serves as a coordination point for (2R)-2-phosphoglycerate. The active-site Proton donor is E205. Residues D242, E285, and D312 each contribute to the Mg(2+) site. K337, R366, S367, and K388 together coordinate (2R)-2-phosphoglycerate. K337 serves as the catalytic Proton acceptor.

The protein belongs to the enolase family. Mg(2+) is required as a cofactor.

The protein localises to the cytoplasm. Its subcellular location is the secreted. The protein resides in the cell surface. The enzyme catalyses (2R)-2-phosphoglycerate = phosphoenolpyruvate + H2O. Its pathway is carbohydrate degradation; glycolysis; pyruvate from D-glyceraldehyde 3-phosphate: step 4/5. Its function is as follows. Catalyzes the reversible conversion of 2-phosphoglycerate (2-PG) into phosphoenolpyruvate (PEP). It is essential for the degradation of carbohydrates via glycolysis. The chain is Enolase from Ralstonia nicotianae (strain ATCC BAA-1114 / GMI1000) (Ralstonia solanacearum).